Consider the following 379-residue polypeptide: MVSSILRDARRIVIKVGSSLVTNEGRGLDETAITEWSRQMAALVNGSGGPRREVIMVSSGAIAEGMKRLGWSARPSEIHELQAAAAVGQMGLAQMYETKLREQGLGSAQVLLTHADLADRERYLNARSTLLTLLRLGVVPVINENDTVVTDEIKFGDNDTLGALVANLVEADALVILTDQKGLYTADPRRDPHAQFVHEAAAGDPSLEAMAGGVGTSIGRGGMITKIIAARRAAGSGASTVIAWGREPDVLLRLTQGEAIGTLLVAQTAKKQARKQWMADHLQLRGAVTVDVGAAAKLRQEGKSLLPIGMVAVEGEFSRGDVIAVRDAAGAEIARGLANYASAEARLLCRRPSSEFERLLGYSAEPEMVHRDNLVLSGG.

Lys-15 contributes to the ATP binding site. Substrate is bound by residues Ser-59, Asp-146, and Asn-158. 178–179 contacts ATP; sequence TD. The region spanning 285-363 is the PUA domain; the sequence is RGAVTVDVGA…SEFERLLGYS (79 aa).

Belongs to the glutamate 5-kinase family.

The protein localises to the cytoplasm. It carries out the reaction L-glutamate + ATP = L-glutamyl 5-phosphate + ADP. It functions in the pathway amino-acid biosynthesis; L-proline biosynthesis; L-glutamate 5-semialdehyde from L-glutamate: step 1/2. Its function is as follows. Catalyzes the transfer of a phosphate group to glutamate to form L-glutamate 5-phosphate. The sequence is that of Glutamate 5-kinase from Paracidovorax citrulli (strain AAC00-1) (Acidovorax citrulli).